The chain runs to 459 residues: Elongation factor 1-alpha (459 aa).

At G2 the chain carries N,N,N-trimethylglycine. N6,N6-dimethyllysine; alternate is present on K3. Position 3 is an N6-methyllysine; alternate (K3). A tr-type G domain is found at 5–240 (KTHVNVVVIG…DAVDPPTRPS (236 aa)). A G1 region spans residues 14–21 (GHVDSGKS). A GTP-binding site is contributed by 14 to 21 (GHVDSGKS). An N6-methyllysine modification is found at K30. Residues 70 to 74 (VITID) form a G2 region. K79 is modified (N6,N6,N6-trimethyllysine). Residues 91 to 94 (DAPG) are G3. GTP is bound by residues 91-95 (DAPGH) and 153-156 (NKMD). A G4 region spans residues 153–156 (NKMD). Positions 192–194 (SGW) are G5. Position 316 is an N6,N6-dimethyllysine; alternate (K316). N6-methyllysine; alternate is present on K316. The residue at position 390 (K390) is an N6-methyllysine.

This sequence belongs to the TRAFAC class translation factor GTPase superfamily. Classic translation factor GTPase family. EF-Tu/EF-1A subfamily.

The protein localises to the cytoplasm. In terms of biological role, this protein promotes the GTP-dependent binding of aminoacyl-tRNA to the A-site of ribosomes during protein biosynthesis. This is Elongation factor 1-alpha (TEF) from Blastobotrys adeninivorans (Yeast).